The primary structure comprises 89 residues: Small ribosomal subunit protein uS15 (89 aa).

This sequence belongs to the universal ribosomal protein uS15 family. Part of the 30S ribosomal subunit. Forms a bridge to the 50S subunit in the 70S ribosome, contacting the 23S rRNA.

Functionally, one of the primary rRNA binding proteins, it binds directly to 16S rRNA where it helps nucleate assembly of the platform of the 30S subunit by binding and bridging several RNA helices of the 16S rRNA. In terms of biological role, forms an intersubunit bridge (bridge B4) with the 23S rRNA of the 50S subunit in the ribosome. This is Small ribosomal subunit protein uS15 from Roseobacter denitrificans (strain ATCC 33942 / OCh 114) (Erythrobacter sp. (strain OCh 114)).